Consider the following 183-residue polypeptide: UPF0134 protein MPN_100 (183 aa).

This sequence belongs to the UPF0134 family.

This chain is UPF0134 protein MPN_100, found in Mycoplasma pneumoniae (strain ATCC 29342 / M129 / Subtype 1) (Mycoplasmoides pneumoniae).